The following is a 536-amino-acid chain: Cytoplasmic dynein 2 intermediate chain 2 (536 aa).

Serine 15 carries the phosphoserine modification. The DYNLL2 binding stretch occupies residues 80 to 93; it reads RNHVDAQVQTEAPV. The DYNLRB1 binding stretch occupies residues 106–131; sequence PRLAAFLRRVEAMVIRELNKNWQSHA. WD repeat units follow at residues 215 to 255, 264 to 308, 390 to 430, 433 to 473, and 480 to 520; these read EVPS…DPLL, THTD…QLQL, PHGG…PLTS, LSLK…QKPT, and QDES…TEQG.

This sequence belongs to the dynein light intermediate chain family. As to quaternary structure, the cytoplasmic dynein 2 complex consists of two catalytic heavy chains (HCs) and a number of non-catalytic subunits presented by intermediate chains (ICs), light intermediate chains (LICs) and light chains (LCs). Among them, a heavy chain (DYNC2H1), two intermediate chains (DYNC2I2 and DYNC2I1), a light intermediate chain (DYNC2LI1), and a light chain (DYNLT2B) are unique to the cytoplasmic dynein complex 2, but a subset of the light chains are also shared by dynein-1 and dynein-2 complexes. Interacts with DYNC2I1; their C-terminal domains each bind a copy of the heavy chain, and their extended N-terminal regions are held together by an array of light chain dimers. Interacts with DYNLL2; this interaction is essential for dynein-2-mediated retrograde trafficking of ciliary proteins. Interacts with DYNLRB1; this interaction is essential for dynein-2-mediated retrograde trafficking of ciliary proteins. Interacts (via the WD domains) with MAP3K7 and TAB3. Interacts (via WD domains) with TAB2 (via C-terminus). Interacts (via WD domains) with TRAF6 (via TRAF-type domains). As to expression, expressed in several cell lines (at protein level).

It localises to the cytoplasm. The protein localises to the cytoskeleton. It is found in the cilium basal body. Its subcellular location is the cilium axoneme. The protein resides in the microtubule organizing center. It localises to the centrosome. The protein localises to the cell projection. It is found in the cilium. Its subcellular location is the filopodium. Its function is as follows. Acts as one of several non-catalytic accessory components of the cytoplasmic dynein 2 complex (dynein-2 complex), a motor protein complex that drives the movement of cargos along microtubules within cilia and flagella in concert with the intraflagellar transport (IFT) system. DYNC2I2 plays a major role in retrograde ciliary protein trafficking and in ciliogenesis. Required also to maintain a functional transition zone. In terms of biological role, acts as a negative regulator of the Toll-like and IL-1R receptor signaling pathways. Inhibits the MAP3K7-induced NF-kappa-B activation pathway. Inhibits MAP3K7 phosphorylation at 'Thr-184' and 'Thr-187' upon Il-1 beta stimulation. This Homo sapiens (Human) protein is Cytoplasmic dynein 2 intermediate chain 2.